The chain runs to 428 residues: Adenylosuccinate synthetase (428 aa).

Residues 12–18 and 40–42 each bind GTP; these read GDEGKGK and GHT. Aspartate 13 acts as the Proton acceptor in catalysis. 2 residues coordinate Mg(2+): aspartate 13 and glycine 40. IMP-binding positions include 13-16, 38-41, threonine 128, arginine 142, glutamine 223, threonine 238, and arginine 302; these read DEGK and NAGH. The active-site Proton donor is histidine 41. 298–304 contacts substrate; sequence TTTGRPR. GTP is bound by residues arginine 304, 330–332, and 412–414; these read SID and SVG.

Belongs to the adenylosuccinate synthetase family. Homodimer. It depends on Mg(2+) as a cofactor.

It localises to the cytoplasm. It catalyses the reaction IMP + L-aspartate + GTP = N(6)-(1,2-dicarboxyethyl)-AMP + GDP + phosphate + 2 H(+). It functions in the pathway purine metabolism; AMP biosynthesis via de novo pathway; AMP from IMP: step 1/2. Its function is as follows. Plays an important role in the de novo pathway of purine nucleotide biosynthesis. Catalyzes the first committed step in the biosynthesis of AMP from IMP. This chain is Adenylosuccinate synthetase, found in Geobacillus sp. (strain WCH70).